The primary structure comprises 138 residues: Putative nickel-responsive regulator (138 aa).

Positions 78, 89, 91, and 97 each coordinate Ni(2+).

It belongs to the transcriptional regulatory CopG/NikR family. Ni(2+) is required as a cofactor.

In terms of biological role, transcriptional regulator. This Pyrococcus abyssi (strain GE5 / Orsay) protein is Putative nickel-responsive regulator.